A 433-amino-acid chain; its full sequence is tRNA-2-methylthio-N(6)-dimethylallyladenosine synthase (433 aa).

In terms of domain architecture, MTTase N-terminal spans 3–118 (KKLFIQTLGC…ISRVIHQEKA (116 aa)). [4Fe-4S] cluster contacts are provided by C12, C49, C81, C150, C154, and C157. The Radical SAM core domain occupies 136-369 (SRNDYKAMVN…QARHKEILEE (234 aa)). Residues 372–433 (QKEVGAIHSV…YRAFLIGEPL (62 aa)) form the TRAM domain.

It belongs to the methylthiotransferase family. MiaB subfamily. Monomer. Requires [4Fe-4S] cluster as cofactor.

The protein resides in the cytoplasm. It catalyses the reaction N(6)-dimethylallyladenosine(37) in tRNA + (sulfur carrier)-SH + AH2 + 2 S-adenosyl-L-methionine = 2-methylsulfanyl-N(6)-dimethylallyladenosine(37) in tRNA + (sulfur carrier)-H + 5'-deoxyadenosine + L-methionine + A + S-adenosyl-L-homocysteine + 2 H(+). In terms of biological role, catalyzes the methylthiolation of N6-(dimethylallyl)adenosine (i(6)A), leading to the formation of 2-methylthio-N6-(dimethylallyl)adenosine (ms(2)i(6)A) at position 37 in tRNAs that read codons beginning with uridine. This chain is tRNA-2-methylthio-N(6)-dimethylallyladenosine synthase, found in Wolinella succinogenes (strain ATCC 29543 / DSM 1740 / CCUG 13145 / JCM 31913 / LMG 7466 / NCTC 11488 / FDC 602W) (Vibrio succinogenes).